The primary structure comprises 92 residues: Putative transcription elongation factor S-II-like protein 81R (92 aa).

A TFIIS-type zinc finger spans residues 51 to 91; the sequence is GTVKCPGCGSRRVHALQRQTRSADEPMTLFAMCSECGKRWT. 4 residues coordinate Zn(2+): cysteine 55, cysteine 58, cysteine 83, and cysteine 86.

This is Putative transcription elongation factor S-II-like protein 81R from Dryophytes versicolor (chameleon treefrog).